Reading from the N-terminus, the 397-residue chain is Pyruvate dehydrogenase E1 component subunit alpha, mitochondrial (397 aa).

10 residues coordinate pyruvate: H98, Y124, R125, G173, V175, D204, G205, A206, N233, and Y235. Thiamine diphosphate contacts are provided by Y124, R125, G173, V175, D204, G205, A206, and N233. Mg(2+) is bound at residue D204. Mg(2+)-binding residues include N233 and Y235. A thiamine diphosphate-binding site is contributed by H299.

Tetramer of 2 alpha and 2 beta subunits. Requires thiamine diphosphate as cofactor. It depends on Mg(2+) as a cofactor.

Its subcellular location is the mitochondrion matrix. It carries out the reaction N(6)-[(R)-lipoyl]-L-lysyl-[protein] + pyruvate + H(+) = N(6)-[(R)-S(8)-acetyldihydrolipoyl]-L-lysyl-[protein] + CO2. Its activity is regulated as follows. E1 activity is regulated by phosphorylation (inactivation) and dephosphorylation (activation) of the alpha subunit. In terms of biological role, the pyruvate dehydrogenase complex catalyzes the overall conversion of pyruvate to acetyl-CoA and CO(2). It contains multiple copies of three enzymatic components: pyruvate dehydrogenase (E1), dihydrolipoamide acetyltransferase (E2) and lipoamide dehydrogenase (E3). The sequence is that of Pyruvate dehydrogenase E1 component subunit alpha, mitochondrial from Pisum sativum (Garden pea).